The chain runs to 141 residues: Histone H2B (141 aa).

Residues 1 to 10 (MPPKAAEKKP) are compositionally biased toward basic and acidic residues. The segment at 1 to 49 (MPPKAAEKKPSTGGKAPAGGKAPAEKKEAGKKTAAAASGDKKKRGKTRK) is disordered. N6-acetyllysine; alternate occurs at positions 8 and 9. Residues Lys8 and Lys9 each participate in a glycyl lysine isopeptide (Lys-Gly) (interchain with G-Cter in SUMO); alternate cross-link. Low complexity predominate over residues 11–22 (STGGKAPAGGKA). Lys15 carries the post-translational modification N6-acetyllysine. N6-acetyllysine; alternate is present on Lys26. Lys26 is covalently cross-linked (Glycyl lysine isopeptide (Lys-Gly) (interchain with G-Cter in SUMO); alternate). Lys27 is covalently cross-linked (Glycyl lysine isopeptide (Lys-Gly) (interchain with G-Cter in SUMO)). Residue Lys135 forms a Glycyl lysine isopeptide (Lys-Gly) (interchain with G-Cter in ubiquitin) linkage.

The protein belongs to the histone H2B family. In terms of assembly, the nucleosome is a histone octamer containing two molecules each of H2A, H2B, H3 and H4 assembled in one H3-H4 heterotetramer and two H2A-H2B heterodimers. The octamer wraps approximately 147 bp of DNA. Monoubiquitinated by the ubc2-bre1 complex to form H2BK123ub1. H2BK123ub1 gives a specific tag for epigenetic transcriptional activation and is also prerequisite for H3K4me and H3K79me formation. H2BK123ub1 also modulates the formation of double-strand breaks during meiosis and is a prerequisite for DNA-damage checkpoint activation. In terms of processing, acetylated by gcn5 to form H2BK11ac and H2BK16ac. H2BK16ac can also be formed by esa1. Acetylation of N-terminal lysines and particularly formation of H2BK11acK16ac has a positive effect on transcription. Post-translationally, sumoylation to form H2BK6su or H2BK7su, and probably also H2BK16su or H2BK17su, occurs preferentially near the telomeres and represses gene transcription.

It is found in the nucleus. The protein localises to the chromosome. Core component of nucleosome. Nucleosomes wrap and compact DNA into chromatin, limiting DNA accessibility to the cellular machineries which require DNA as a template. Histones thereby play a central role in transcription regulation, DNA repair, DNA replication and chromosomal stability. DNA accessibility is regulated via a complex set of post-translational modifications of histones, also called histone code, and nucleosome remodeling. In Aspergillus niger (strain ATCC MYA-4892 / CBS 513.88 / FGSC A1513), this protein is Histone H2B (htb1).